A 245-amino-acid chain; its full sequence is Eukaryotic translation initiation factor 6-2 (245 aa).

This sequence belongs to the eIF-6 family. In terms of assembly, monomer. Associates with the 60S ribosomal subunit.

The protein resides in the cytoplasm. It localises to the nucleus. It is found in the nucleolus. Its function is as follows. Binds to the 60S ribosomal subunit and prevents its association with the 40S ribosomal subunit to form the 80S initiation complex in the cytoplasm. May also be involved in ribosome biogenesis. The protein is Eukaryotic translation initiation factor 6-2 of Arabidopsis thaliana (Mouse-ear cress).